We begin with the raw amino-acid sequence, 224 residues long: MSILLPNMAEFDTISELEEEEEEEAATSSSSPSSSSSVSGPDDDEEDEEEEEEEEEEEEEEEEEEEEEAPPPPRVVSEEHLRRYAPDPVLVRGAGHITVFGLSNKFDTEFPSVLTGKVAPEEFKTSIGRVNACLKKALPVNVKWLLCGCLCCCCTLGCSLWPVICLNKRTRRSIQKLIEWENNRLYHKLALHWKLTKRKCETSNMMEYVILIEFLPKYPIFRPD.

The interval 1-80 is disordered; that stretch reads MSILLPNMAE…PPPRVVSEEH (80 aa). The span at 13 to 25 shows a compositional bias: acidic residues; sequence TISELEEEEEEEA. Positions 26-40 are enriched in low complexity; sequence ATSSSSPSSSSSVSG. Residues 41–69 are compositionally biased toward acidic residues; sequence PDDDEEDEEEEEEEEEEEEEEEEEEEEEA. The stretch at 42–70 forms a coiled coil; sequence DDDEEDEEEEEEEEEEEEEEEEEEEEEAP.

This sequence belongs to the CHIC family. Palmitoylated. Equally expressed in various parts of the brain.

Its subcellular location is the cell membrane. It localises to the cytoplasmic vesicle. This chain is Cysteine-rich hydrophobic domain-containing protein 1 (CHIC1), found in Homo sapiens (Human).